The chain runs to 439 residues: Proline--tRNA ligase (439 aa).

Belongs to the class-II aminoacyl-tRNA synthetase family. ProS type 2 subfamily. In terms of assembly, homodimer.

The protein localises to the cytoplasm. It catalyses the reaction tRNA(Pro) + L-proline + ATP = L-prolyl-tRNA(Pro) + AMP + diphosphate. In terms of biological role, catalyzes the attachment of proline to tRNA(Pro) in a two-step reaction: proline is first activated by ATP to form Pro-AMP and then transferred to the acceptor end of tRNA(Pro). The polypeptide is Proline--tRNA ligase (Bradyrhizobium diazoefficiens (strain JCM 10833 / BCRC 13528 / IAM 13628 / NBRC 14792 / USDA 110)).